A 60-amino-acid chain; its full sequence is Ferredoxin (60 aa).

4Fe-4S ferredoxin-type domains are found at residues 2 to 29 (KVRV…LGDD) and 30 to 60 (GKAK…SVEE). Residues C10, C13, and C16 each contribute to the [4Fe-4S] cluster site. A disulfide bond links C20 and C43. C51 serves as a coordination point for [4Fe-4S] cluster.

Monomer. [4Fe-4S] cluster serves as cofactor.

Ferredoxins are iron-sulfur proteins that transfer electrons in a wide variety of metabolic reactions. The chain is Ferredoxin (fdx) from Thermotoga maritima (strain ATCC 43589 / DSM 3109 / JCM 10099 / NBRC 100826 / MSB8).